Here is a 228-residue protein sequence, read N- to C-terminus: Translin (228 aa).

Residues R86–H90 are DNA/RNA binding. Residues L177–L198 are leucine-zipper. K187 is subject to N6-acetyllysine. S190 carries the post-translational modification Phosphoserine. Residue K199 is modified to N6-acetyllysine.

The protein belongs to the translin family. Ring-shaped heterooctamer of six TSN and two TSNAX subunits, DNA/RNA binding occurs inside the ring.

The protein resides in the cytoplasm. Its subcellular location is the nucleus. Its function is as follows. DNA-binding protein that specifically recognizes consensus sequences at the breakpoint junctions in chromosomal translocations, mostly involving immunoglobulin (Ig)/T-cell receptor gene segments. Seems to recognize single-stranded DNA ends generated by staggered breaks occurring at recombination hot spots. In terms of biological role, exhibits both single-stranded and double-stranded endoribonuclease activity. May act as an activator of RNA-induced silencing complex (RISC) by facilitating endonucleolytic cleavage of the siRNA passenger strand. The protein is Translin (TSN) of Pongo abelii (Sumatran orangutan).